We begin with the raw amino-acid sequence, 153 residues long: MSKLAELQAETREIIEDLLNDGSEPNALYIIEHHIAHHDFDLLEKIAVDAFKAGYEVSEAEEFKDDDGKPIFCFDIISEVELKAEIIDAQQKEILPLLEKHNGIYDGWGTYFEDPNADDDEYGDDGEFLDDEDEYGDDGEFFDDEDEEEPRVH.

Residues 114-153 (DPNADDDEYGDDGEFLDDEDEYGDDGEFFDDEDEEEPRVH) form a disordered region. Positions 115 to 153 (PNADDDEYGDDGEFLDDEDEYGDDGEFFDDEDEEEPRVH) are enriched in acidic residues.

Belongs to the RraB family. In terms of assembly, interacts with the C-terminal region of Rne.

The protein localises to the cytoplasm. Globally modulates RNA abundance by binding to RNase E (Rne) and regulating its endonucleolytic activity. Can modulate Rne action in a substrate-dependent manner by altering the composition of the degradosome. The sequence is that of Regulator of ribonuclease activity B from Haemophilus influenzae (strain ATCC 51907 / DSM 11121 / KW20 / Rd).